A 707-amino-acid polypeptide reads, in one-letter code: Alpha-hemolysin translocation ATP-binding protein HlyB (707 aa).

The 124-residue stretch at 2–125 (DFHHKNNYGL…DLYQGNIILI (124 aa)) folds into the Peptidase C39 domain. His83 is a catalytic residue. In terms of domain architecture, ABC transmembrane type-1 spans 154–436 (FIETLIVSVF…LAQLWQDFQQ (283 aa)). Transmembrane regions (helical) follow at residues 158–178 (LIVS…FQVV), 191–211 (LNII…LSGL), 269–289 (ALTS…MWYY), 295–315 (LVIL…SPIL), and 387–407 (AVMI…DLSI). One can recognise an ABC transporter domain in the interval 468 to 703 (ISFRNIRFRY…PESLYHYLHQ (236 aa)). 502–509 (GRSGSGKS) contributes to the ATP binding site.

This sequence belongs to the ABC transporter superfamily. Protein-1 exporter (TC 3.A.1.109) family.

It is found in the cell membrane. Involved in the export of hemolysin A. This chain is Alpha-hemolysin translocation ATP-binding protein HlyB (hlyB), found in Proteus vulgaris.